We begin with the raw amino-acid sequence, 429 residues long: Glutamate-1-semialdehyde 2,1-aminomutase (429 aa).

Position 267 is an N6-(pyridoxal phosphate)lysine (Lys-267).

It belongs to the class-III pyridoxal-phosphate-dependent aminotransferase family. HemL subfamily. Homodimer. Pyridoxal 5'-phosphate serves as cofactor.

It localises to the cytoplasm. It catalyses the reaction (S)-4-amino-5-oxopentanoate = 5-aminolevulinate. The protein operates within porphyrin-containing compound metabolism; protoporphyrin-IX biosynthesis; 5-aminolevulinate from L-glutamyl-tRNA(Glu): step 2/2. This is Glutamate-1-semialdehyde 2,1-aminomutase from Xanthomonas axonopodis pv. citri (strain 306).